Reading from the N-terminus, the 473-residue chain is GTPase Der (473 aa).

EngA-type G domains follow at residues 3 to 167 and 203 to 378; these read FTVA…GEDR and LRVA…KVWN. GTP-binding positions include 9-16, 56-60, 119-122, 209-216, 256-260, and 321-324; these read GRPNVGKS, DTAGL, NKSE, GRPNAGKS, DTAGM, and NKWD. The region spanning 379–463 is the KH-like domain; that stretch reads KRISTARLNR…PIRIHFRSPD (85 aa).

This sequence belongs to the TRAFAC class TrmE-Era-EngA-EngB-Septin-like GTPase superfamily. EngA (Der) GTPase family. Associates with the 50S ribosomal subunit.

Its function is as follows. GTPase that plays an essential role in the late steps of ribosome biogenesis. The polypeptide is GTPase Der (Rhizobium johnstonii (strain DSM 114642 / LMG 32736 / 3841) (Rhizobium leguminosarum bv. viciae)).